We begin with the raw amino-acid sequence, 421 residues long: 26S proteasome non-ATPase regulatory subunit 11A (421 aa).

The PCI domain occupies 227 to 391 (AYSYFYEAFE…GVLIVFDEPP (165 aa)).

This sequence belongs to the proteasome subunit S9 family. As to quaternary structure, component of the lid subcomplex of the 19S proteasome regulatory particle complex (also named PA700 complex). The 26S proteasome consists of a 20S proteasome core and two 19S regulatory subunits.

Its subcellular location is the nucleus. The protein localises to the cytoplasm. The protein resides in the cytosol. Its function is as follows. Component of the lid subcomplex of the 26S proteasome, a multiprotein complex involved in the ATP-dependent degradation of ubiquitinated proteins. In the complex, psmd11a is required for proteasome assembly. This Danio rerio (Zebrafish) protein is 26S proteasome non-ATPase regulatory subunit 11A (psmd11a).